The chain runs to 142 residues: Large ribosomal subunit protein uL16 (142 aa).

The span at 1 to 14 (MLSPRRTKFRKQQR) shows a compositional bias: basic residues. Positions 1-22 (MLSPRRTKFRKQQRGRMTGKAT) are disordered.

This sequence belongs to the universal ribosomal protein uL16 family. As to quaternary structure, part of the 50S ribosomal subunit.

Functionally, binds 23S rRNA and is also seen to make contacts with the A and possibly P site tRNAs. This Synechococcus elongatus (strain ATCC 33912 / PCC 7942 / FACHB-805) (Anacystis nidulans R2) protein is Large ribosomal subunit protein uL16.